The chain runs to 101 residues: Small ribosomal subunit protein bS6 (101 aa).

Belongs to the bacterial ribosomal protein bS6 family.

Binds together with bS18 to 16S ribosomal RNA. In Nitratidesulfovibrio vulgaris (strain DSM 19637 / Miyazaki F) (Desulfovibrio vulgaris), this protein is Small ribosomal subunit protein bS6.